The following is a 284-amino-acid chain: Pantothenate synthetase (284 aa).

30–37 contributes to the ATP binding site; sequence MGFLHEGH. Catalysis depends on His-37, which acts as the Proton donor. Position 61 (Gln-61) interacts with (R)-pantoate. Gln-61 is a binding site for beta-alanine. An ATP-binding site is contributed by 147 to 150; sequence GRKD. Gln-153 lines the (R)-pantoate pocket. ATP-binding positions include Val-176 and 184–187; that span reads MSSR.

This sequence belongs to the pantothenate synthetase family. Homodimer.

The protein localises to the cytoplasm. It carries out the reaction (R)-pantoate + beta-alanine + ATP = (R)-pantothenate + AMP + diphosphate + H(+). Its pathway is cofactor biosynthesis; (R)-pantothenate biosynthesis; (R)-pantothenate from (R)-pantoate and beta-alanine: step 1/1. In terms of biological role, catalyzes the condensation of pantoate with beta-alanine in an ATP-dependent reaction via a pantoyl-adenylate intermediate. This is Pantothenate synthetase from Pelobacter propionicus (strain DSM 2379 / NBRC 103807 / OttBd1).